A 1099-amino-acid chain; its full sequence is ATP-dependent helicase/deoxyribonuclease subunit B (1099 aa).

Positions 766, 1056, 1059, and 1065 each coordinate [4Fe-4S] cluster.

The protein belongs to the helicase family. AddB/RexB type 2 subfamily. In terms of assembly, heterodimer of AddA and RexB. Requires Mg(2+) as cofactor. [4Fe-4S] cluster serves as cofactor.

Its function is as follows. The heterodimer acts as both an ATP-dependent DNA helicase and an ATP-dependent, dual-direction single-stranded exonuclease. Recognizes the chi site generating a DNA molecule suitable for the initiation of homologous recombination. This subunit has 5' -&gt; 3' nuclease activity but not helicase activity. The protein is ATP-dependent helicase/deoxyribonuclease subunit B of Lactococcus lactis subsp. cremoris (strain SK11).